Consider the following 121-residue polypeptide: Basic phospholipase A2 BmjeTX-I (121 aa).

Cystine bridges form between cysteine 26-cysteine 114, cysteine 28-cysteine 45, cysteine 44-cysteine 95, cysteine 50-cysteine 121, cysteine 51-cysteine 88, cysteine 58-cysteine 82, and cysteine 76-cysteine 86. Ca(2+) is bound by residues tyrosine 27, glycine 29, and glycine 31. The active site involves histidine 48. Aspartate 49 is a binding site for Ca(2+). Aspartate 89 is an active-site residue.

It depends on Ca(2+) as a cofactor. As to expression, expressed by the venom gland.

It is found in the secreted. It catalyses the reaction a 1,2-diacyl-sn-glycero-3-phosphocholine + H2O = a 1-acyl-sn-glycero-3-phosphocholine + a fatty acid + H(+). Snake venom phospholipase A2 (PLA2) that induces a slight blockade of neuromuscular contraction in an indirectly stimulated chick biventer cervicis nerve-muscle preparation. Does not inhibit contraction of chick biventer cervicic nerve-muscle preparation in response to treatment with acetylcholine or KCl. The neuromuscular blockade is mediated by inhibitory action at the presynaptic motor nerve endings. Lyses skeletal myoblasts and myotubes in vitro, and intramuscular injection causes local muscle necrosis. Induces edema in the mouse foot pad. Induces a transient increase of IL-6 levels. PLA2 catalyzes the calcium-dependent hydrolysis of the 2-acyl groups in 3-sn-phosphoglycerides. This Bothrops marajoensis (Marajo lancehead) protein is Basic phospholipase A2 BmjeTX-I.